Reading from the N-terminus, the 179-residue chain is Large ribosomal subunit protein uL5 (179 aa).

The protein belongs to the universal ribosomal protein uL5 family. As to quaternary structure, part of the 50S ribosomal subunit; part of the 5S rRNA/L5/L18/L25 subcomplex. Contacts the 5S rRNA and the P site tRNA. Forms a bridge to the 30S subunit in the 70S ribosome.

This is one of the proteins that bind and probably mediate the attachment of the 5S RNA into the large ribosomal subunit, where it forms part of the central protuberance. In the 70S ribosome it contacts protein S13 of the 30S subunit (bridge B1b), connecting the 2 subunits; this bridge is implicated in subunit movement. Contacts the P site tRNA; the 5S rRNA and some of its associated proteins might help stabilize positioning of ribosome-bound tRNAs. The sequence is that of Large ribosomal subunit protein uL5 from Salmonella agona (strain SL483).